The primary structure comprises 286 residues: Acetylglutamate kinase (286 aa).

Substrate contacts are provided by residues 63 to 64, Arg85, and Asn178; that span reads GG.

This sequence belongs to the acetylglutamate kinase family. ArgB subfamily.

The protein resides in the cytoplasm. It carries out the reaction N-acetyl-L-glutamate + ATP = N-acetyl-L-glutamyl 5-phosphate + ADP. It participates in amino-acid biosynthesis; L-arginine biosynthesis; N(2)-acetyl-L-ornithine from L-glutamate: step 2/4. In terms of biological role, catalyzes the ATP-dependent phosphorylation of N-acetyl-L-glutamate. The polypeptide is Acetylglutamate kinase (Clostridioides difficile (strain 630) (Peptoclostridium difficile)).